Consider the following 275-residue polypeptide: Undecaprenyl-diphosphatase (275 aa).

8 consecutive transmembrane segments (helical) span residues 2 to 22 (LDIF…FLPI), 43 to 63 (FTDM…VVLY), 83 to 103 (WVLW…GLPL), 111 to 131 (LMNW…FIVI), 147 to 167 (TLPY…LIPG), 186 to 206 (YVAT…ASLL), 221 to 241 (LQGA…YLSI), and 255 to 275 (AFGW…TLIH).

Belongs to the UppP family.

The protein resides in the cell membrane. The catalysed reaction is di-trans,octa-cis-undecaprenyl diphosphate + H2O = di-trans,octa-cis-undecaprenyl phosphate + phosphate + H(+). Catalyzes the dephosphorylation of undecaprenyl diphosphate (UPP). Confers resistance to bacitracin. This Lactiplantibacillus plantarum (strain ATCC BAA-793 / NCIMB 8826 / WCFS1) (Lactobacillus plantarum) protein is Undecaprenyl-diphosphatase.